Here is a 436-residue protein sequence, read N- to C-terminus: Histidinol dehydrogenase (436 aa).

NAD(+) contacts are provided by tyrosine 135, glutamine 196, and asparagine 219. Substrate-binding residues include serine 242, glutamine 264, and histidine 267. Zn(2+) is bound by residues glutamine 264 and histidine 267. Active-site proton acceptor residues include glutamate 332 and histidine 333. Residues histidine 333, aspartate 366, glutamate 420, and histidine 425 each coordinate substrate. Aspartate 366 is a binding site for Zn(2+). Residue histidine 425 participates in Zn(2+) binding.

Belongs to the histidinol dehydrogenase family. The cofactor is Zn(2+).

The enzyme catalyses L-histidinol + 2 NAD(+) + H2O = L-histidine + 2 NADH + 3 H(+). It functions in the pathway amino-acid biosynthesis; L-histidine biosynthesis; L-histidine from 5-phospho-alpha-D-ribose 1-diphosphate: step 9/9. Functionally, catalyzes the sequential NAD-dependent oxidations of L-histidinol to L-histidinaldehyde and then to L-histidine. This is Histidinol dehydrogenase from Methylococcus capsulatus (strain ATCC 33009 / NCIMB 11132 / Bath).